Here is a 169-residue protein sequence, read N- to C-terminus: Major pepsin inhibitor 3 (169 aa).

Positions 1-20 (MHVWLILSLASLWTSSIAYS) are cleaved as a signal peptide. Glutamine 21 is subject to Pyrrolidone carboxylic acid. Intrachain disulfides connect cysteine 33/cysteine 79, cysteine 68/cysteine 86, and cysteine 99/cysteine 166. The disordered stretch occupies residues 135–169 (EEQQENQPPSSGMPHGAVPAGGLSPPPPPSFCTVQ). The segment covering 158-169 (SPPPPPSFCTVQ) has biased composition (pro residues).

It belongs to the protease inhibitor I33 family. Body wall.

The protein resides in the secreted. In terms of biological role, this is an inhibitor of the aspartic protease pepsin. The polypeptide is Major pepsin inhibitor 3 (Ascaris suum (Pig roundworm)).